The chain runs to 154 residues: Melatonin receptor type 1A (154 aa).

The Cytoplasmic segment spans residues 1 to 19 (YCYICHSLKYDRWYSNRNS). Residues 20–40 (LCCVFLICVLTLVAIVPNLCM) traverse the membrane as a helical segment. Over 41–62 (GTLQYDPRIYSCTFAQSVSSAY) the chain is Extracellular. A helical transmembrane segment spans residues 63–83 (TIAVVVFHFLVPMVIVIFRYL). At 84 to 115 (RIWVLVLQIRWRAKPENNPRLKPQDFRNFVTM) the chain is on the cytoplasmic side. A helical membrane pass occupies residues 116–136 (FVVFVLFAICWAPLNFIGLAV). At 137–149 (ASDPASMAPRIPE) the chain is on the extracellular side.

It belongs to the G-protein coupled receptor 1 family.

It localises to the cell membrane. In terms of biological role, high affinity receptor for melatonin. Likely to mediate the reproductive and circadian actions of melatonin. The activity of this receptor is mediated by pertussis toxin sensitive G proteins that inhibit adenylate cyclase activity. The protein is Melatonin receptor type 1A (MTNR1A) of Sus scrofa (Pig).